Here is a 337-residue protein sequence, read N- to C-terminus: GTP 3',8-cyclase (337 aa).

Residues 17–243 enclose the Radical SAM core domain; sequence PFQRQYYYLR…HKSHTDGPAK (227 aa). Arginine 26 is a binding site for GTP. [4Fe-4S] cluster contacts are provided by cysteine 33 and cysteine 37. Tyrosine 39 lines the S-adenosyl-L-methionine pocket. Cysteine 40 contacts [4Fe-4S] cluster. Residue arginine 76 coordinates GTP. Residue glycine 80 participates in S-adenosyl-L-methionine binding. Threonine 107 provides a ligand contact to GTP. Serine 131 contacts S-adenosyl-L-methionine. Lysine 168 contacts GTP. Residue methionine 202 participates in S-adenosyl-L-methionine binding. 2 residues coordinate [4Fe-4S] cluster: cysteine 265 and cysteine 268. GTP is bound at residue 270–272; sequence RLR. Residue cysteine 282 coordinates [4Fe-4S] cluster.

Belongs to the radical SAM superfamily. MoaA family. In terms of assembly, monomer and homodimer. [4Fe-4S] cluster serves as cofactor.

It carries out the reaction GTP + AH2 + S-adenosyl-L-methionine = (8S)-3',8-cyclo-7,8-dihydroguanosine 5'-triphosphate + 5'-deoxyadenosine + L-methionine + A + H(+). The protein operates within cofactor biosynthesis; molybdopterin biosynthesis. Functionally, catalyzes the cyclization of GTP to (8S)-3',8-cyclo-7,8-dihydroguanosine 5'-triphosphate. This Haemophilus influenzae (strain PittGG) protein is GTP 3',8-cyclase.